Here is a 303-residue protein sequence, read N- to C-terminus: Acetylglutamate kinase (303 aa).

Substrate is bound by residues G67–G68, R89, and N193.

The protein belongs to the acetylglutamate kinase family. ArgB subfamily.

It is found in the cytoplasm. It carries out the reaction N-acetyl-L-glutamate + ATP = N-acetyl-L-glutamyl 5-phosphate + ADP. It participates in amino-acid biosynthesis; L-arginine biosynthesis; N(2)-acetyl-L-ornithine from L-glutamate: step 2/4. In terms of biological role, catalyzes the ATP-dependent phosphorylation of N-acetyl-L-glutamate. The sequence is that of Acetylglutamate kinase from Acinetobacter baylyi (strain ATCC 33305 / BD413 / ADP1).